A 172-amino-acid chain; its full sequence is C-phycocyanin beta chain (172 aa).

Residues Asn35, Asp39, Asn72, Arg77, Cys82, 82-88, 149-151, and Cys153 contribute to the (2R,3E)-phycocyanobilin site; these read CLRDMEI and TTG. Residue Asn72 is modified to N4-methylasparagine.

Belongs to the phycobiliprotein family. Heterodimer of an alpha and a beta subunit. Dimers further assemble into trimers and the trimers into hexamers. The basic functional unit of phycobiliproteins is a ring-shaped hexamer formed from two back-to-back trimers contacting via the alpha chain subunits. The trimers are composed of alpha/beta subunit heterodimers arranged around a three-fold axis of symmetry. The phycoerythrins also contain a gamma subunit which is located in the center of the hexamer. Contains two covalently linked phycocyanobilin chromophores.

The protein localises to the plastid. The protein resides in the chloroplast thylakoid membrane. In terms of biological role, light-harvesting photosynthetic tetrapyrrole chromophore-protein from the phycobiliprotein complex (phycobilisome, PBS). Phycocyanin is the major phycobiliprotein in the PBS rod. This chain is C-phycocyanin beta chain (cpcB), found in Galdieria sulphuraria (Red alga).